We begin with the raw amino-acid sequence, 64 residues long: Large ribosomal subunit protein bL28 (64 aa).

Belongs to the bacterial ribosomal protein bL28 family.

In Bifidobacterium longum (strain NCC 2705), this protein is Large ribosomal subunit protein bL28.